The chain runs to 99 residues: Large ribosomal subunit protein uL23 (99 aa).

It belongs to the universal ribosomal protein uL23 family. In terms of assembly, part of the 50S ribosomal subunit. Contacts protein L29, and trigger factor when it is bound to the ribosome.

Its function is as follows. One of the early assembly proteins it binds 23S rRNA. One of the proteins that surrounds the polypeptide exit tunnel on the outside of the ribosome. Forms the main docking site for trigger factor binding to the ribosome. The sequence is that of Large ribosomal subunit protein uL23 from Blochmanniella floridana.